A 207-amino-acid polypeptide reads, in one-letter code: MESSRRPLGLTKPSALEIMEIEAEGISQSRLQLLNPIPGVWFPITLGFRALPNSRREKSFSLYKDRECLLPMESQLQSKRDIGIDTTDVLLKHLMASRSSYCPDGIFTISEQGPMLAQSMATISKELSGSQANRPTLRPLPILLKGTQVAMRLFLLGLRPVRFCLRVFMLKAQEGLHLLADLVRGHNPVGQIIALEAAPTSASLPLL.

It belongs to the coronavirus I protein family.

The protein localises to the virion. Functionally, structural protein that is not essential for the viral replication either in tissue culture or in its natural host. This is Protein I (N) from Mus musculus (Mouse).